The chain runs to 32 residues: Photosystem I reaction center subunit XII (32 aa).

The chain crosses the membrane as a helical span at residues V9–T28.

It belongs to the PsaM family.

It is found in the cellular thylakoid membrane. The sequence is that of Photosystem I reaction center subunit XII from Nostoc sp. (strain PCC 7120 / SAG 25.82 / UTEX 2576).